The following is a 1666-amino-acid chain: Latent-transforming growth factor beta-binding protein 4 (1666 aa).

The N-terminal stretch at 1–24 (MRRPGLGGPCPLLLLLLLPAATSA) is a signal peptide. The EGF-like 1 domain maps to 148-180 (ARVLCPLICHNGGVCVKPDRCLCPPDFAGKFCQ). Disulfide bonds link Cys152-Cys162, Cys156-Cys168, Cys170-Cys179, Cys288-Cys310, Cys297-Cys323, and Cys311-Cys326. Residues 286–338 (GYCFRELRGSECASPLPGLRTQEVCCRGEGLAWGVHDCHPCAEHLRNSNQVSG) form the TB 1 domain. Residue Asn351 is glycosylated (N-linked (GlcNAc...) asparagine). The 41-residue stretch at 356 to 396 (DVDECATGGRCQHGECANTRGGYTCVCPDGFLLDSSRSSCI) folds into the EGF-like 2; calcium-binding domain. 7 cysteine pairs are disulfide-bonded: Cys360/Cys371, Cys366/Cys380, Cys382/Cys395, Cys408/Cys430, Cys417/Cys443, Cys431/Cys446, and Cys432/Cys458. A TB 2 domain is found at 406 to 458 (GPCYRVLHDGGCSLPILRNITKQICCCSRVGKAWGRGCQLCPPYGSEGFREIC). Residue Asn424 is glycosylated (N-linked (GlcNAc...) asparagine). The segment at 473–590 (YNTRPLNQDP…EIPESGPSSS (118 aa)) is disordered. The segment covering 491–502 (RVPPATPRPPTG) has biased composition (pro residues). Over residues 521-561 (PRPRPEPRPRPESRPRPEPRPRPEPRPQPESQPRPESRPRP) the composition is skewed to basic and acidic residues. Residues 562–573 (ESQPWPEFPLPS) are compositionally biased toward pro residues. Residues 579 to 590 (GPEIPESGPSSS) show a composition bias toward low complexity. The region spanning 588-629 (SSSMCQRNPQVCGPGRCVPRPSGYTCACDPGFRLGPQGTRCI) is the EGF-like 3 domain. 30 disulfides stabilise this stretch: Cys592–Cys604, Cys599–Cys613, Cys615–Cys628, Cys634–Cys646, Cys641–Cys655, Cys657–Cys670, Cys676–Cys688, Cys683–Cys697, Cys699–Cys712, Cys718–Cys730, Cys725–Cys739, Cys741–Cys750, Cys757–Cys769, Cys764–Cys778, Cys780–Cys793, Cys799–Cys811, Cys806–Cys820, Cys822–Cys835, Cys881–Cys893, Cys887–Cys902, Cys904–Cys918, Cys924–Cys936, Cys930–Cys945, Cys947–Cys960, Cys966–Cys977, Cys972–Cys986, Cys988–Cys1001, Cys1095–Cys1107, Cys1101–Cys1116, and Cys1118–Cys1131. The 42-residue stretch at 630–671 (DIDECRRVPTPCAPGRCENTPGSFRCVCGTGFQAGPRATECL) folds into the EGF-like 4; calcium-binding domain. Residues 672–713 (DVDECRRVPPPCDRGRCENTPGSFLCVCPAGYQAAPHGASCQ) enclose the EGF-like 5; calcium-binding domain. One can recognise an EGF-like 6; calcium-binding domain in the interval 714–751 (DVDECTQSPGLCGRGVCENLPGSFRCVCPAGFRGSACE). The region spanning 753–794 (DVDECAQQPPPCGPGRCDNTAGSFHCACPAGFRSRGPGAPCQ) is the EGF-like 7; calcium-binding domain. In terms of domain architecture, EGF-like 8; calcium-binding spans 795 to 836 (DVDECSRSPSPCAYGRCENTEGSFKCVCPTGFQPNAAGSECE). The 43-residue stretch at 877 to 919 (DVDECSSGTPCGLHGQCTNTKGSFHCSCSTGYRAPSGQPGPCA) folds into the EGF-like 9; calcium-binding domain. The 42-residue stretch at 920–961 (DINECLEGDFCFPHGECLNTDGSFTCTCAPGYRPGPRGASCL) folds into the EGF-like 10; calcium-binding domain. Positions 962 to 1002 (DVDECSEEDLCQSGICTNTDGSFECICPPGHRAGPDLASCL) constitute an EGF-like 11; calcium-binding domain. Positions 1091–1132 (DVDECRNRSFCGAHAMCQNLPGSFQCVCDQGYEGARDGRHCV) constitute an EGF-like 12; calcium-binding domain. An N-linked (GlcNAc...) asparagine glycan is attached at Asn1097. The interval 1171–1221 (TGRCVPPRAPAGTFPGSQPQAPASPSLPARPPAPPPPRRPSPPRQGPVSSG) is disordered. Residues 1185 to 1197 (PGSQPQAPASPSL) show a composition bias toward low complexity. Over residues 1198–1215 (PARPPAPPPPRRPSPPRQ) the composition is skewed to pro residues. Residues 1223 to 1277 (RECYFDTAAPDACDNILARNVTWQECCCTVGEGWGSGCRIQQCPGTETAEYQSLC) enclose the TB 3 domain. 10 disulfides stabilise this stretch: Cys1225/Cys1248, Cys1235/Cys1260, Cys1249/Cys1265, Cys1250/Cys1277, Cys1299/Cys1312, Cys1307/Cys1321, Cys1323/Cys1336, Cys1342/Cys1354, Cys1349/Cys1363, and Cys1365/Cys1378. N-linked (GlcNAc...) asparagine glycosylation is present at Asn1242. Positions 1295-1337 (DVDECQLFQDQVCKSGVCVNTAPGYSCYCSNGFYYHAHRLECV) constitute an EGF-like 13; calcium-binding domain. The region spanning 1338–1379 (DNDECADEEPACEGGRCVNTVGSYHCTCEPPLVLDGSRRRCV) is the EGF-like 14; calcium-binding domain. A glycan (N-linked (GlcNAc...) asparagine) is linked at Asn1381. Positions 1391–1444 (GVCWQEVGPDLVCSRPRLDRQATYTECCCLYGEAWGMDCALCPAQDSDDFEALC) constitute a TB 4 domain. 4 disulfides stabilise this stretch: Cys1393-Cys1417, Cys1403-Cys1429, Cys1418-Cys1432, and Cys1419-Cys1444. A compositionally biased stretch (pro residues) spans 1488 to 1500 (VLPYDPYPPPPGP). The disordered stretch occupies residues 1488–1566 (VLPYDPYPPP…SSERGSYTGA (79 aa)). A Phosphothreonine modification is found at Thr1564. 2 consecutive EGF-like domains span residues 1575-1615 (EAEE…MSCV) and 1616-1660 (DVNE…HHCA). 6 disulfides stabilise this stretch: Cys1579–Cys1590, Cys1585–Cys1599, Cys1601–Cys1614, Cys1620–Cys1635, Cys1630–Cys1644, and Cys1646–Cys1659.

Belongs to the LTBP family. In terms of assembly, forms part of the large latent transforming growth factor beta precursor complex; removal is essential for activation of complex. Interacts with LTBP1 and TGFB1. Interacts with EFEMP2; this interaction promotes fibrillar deposition of EFEMP2. In terms of processing, contains hydroxylated asparagine residues.

The protein localises to the secreted. The protein resides in the extracellular space. Its subcellular location is the extracellular matrix. In terms of biological role, key regulator of transforming growth factor beta (TGFB1, TGFB2 and TGFB3) that controls TGF-beta activation by maintaining it in a latent state during storage in extracellular space. Associates specifically via disulfide bonds with the Latency-associated peptide (LAP), which is the regulatory chain of TGF-beta, and regulates integrin-dependent activation of TGF-beta. This Mus musculus (Mouse) protein is Latent-transforming growth factor beta-binding protein 4 (Ltbp4).